Consider the following 459-residue polypeptide: ATP synthase subunit beta (459 aa).

148–155 contacts ATP; the sequence is GGAGVGKT.

This sequence belongs to the ATPase alpha/beta chains family. In terms of assembly, F-type ATPases have 2 components, CF(1) - the catalytic core - and CF(0) - the membrane proton channel. CF(1) has five subunits: alpha(3), beta(3), gamma(1), delta(1), epsilon(1). CF(0) has three main subunits: a(1), b(2) and c(9-12). The alpha and beta chains form an alternating ring which encloses part of the gamma chain. CF(1) is attached to CF(0) by a central stalk formed by the gamma and epsilon chains, while a peripheral stalk is formed by the delta and b chains.

The protein resides in the cell inner membrane. It carries out the reaction ATP + H2O + 4 H(+)(in) = ADP + phosphate + 5 H(+)(out). Functionally, produces ATP from ADP in the presence of a proton gradient across the membrane. The catalytic sites are hosted primarily by the beta subunits. The polypeptide is ATP synthase subunit beta (Hahella chejuensis (strain KCTC 2396)).